The following is a 309-amino-acid chain: Coproporphyrin III ferrochelatase (309 aa).

Fe-coproporphyrin III contacts are provided by residues tyrosine 12, threonine 14, arginine 29, 45–46 (RY), serine 53, and tyrosine 124. Fe(2+) is bound by residues histidine 182 and glutamate 263.

It belongs to the ferrochelatase family. Monomer.

The protein resides in the cytoplasm. It catalyses the reaction Fe-coproporphyrin III + 2 H(+) = coproporphyrin III + Fe(2+). The protein operates within porphyrin-containing compound metabolism; protoheme biosynthesis. Its function is as follows. Involved in coproporphyrin-dependent heme b biosynthesis. Catalyzes the insertion of ferrous iron into coproporphyrin III to form Fe-coproporphyrin III. This chain is Coproporphyrin III ferrochelatase, found in Listeria monocytogenes serovar 1/2a (strain ATCC BAA-679 / EGD-e).